The sequence spans 359 residues: Fructose-bisphosphate aldolase, cytoplasmic isozyme (359 aa).

Positions 52 and 142 each coordinate substrate. The active-site Proton acceptor is Glu184. Lys226 (schiff-base intermediate with dihydroxyacetone-P) is an active-site residue.

The protein belongs to the class I fructose-bisphosphate aldolase family.

Its subcellular location is the cytoplasm. It carries out the reaction beta-D-fructose 1,6-bisphosphate = D-glyceraldehyde 3-phosphate + dihydroxyacetone phosphate. It functions in the pathway carbohydrate degradation; glycolysis; D-glyceraldehyde 3-phosphate and glycerone phosphate from D-glucose: step 4/4. The sequence is that of Fructose-bisphosphate aldolase, cytoplasmic isozyme (ALDC) from Cicer arietinum (Chickpea).